The following is a 74-amino-acid chain: Large ribosomal subunit protein uL29 (74 aa).

It belongs to the universal ribosomal protein uL29 family.

This is Large ribosomal subunit protein uL29 from Nostoc sp. (strain PCC 7120 / SAG 25.82 / UTEX 2576).